We begin with the raw amino-acid sequence, 122 residues long: Large ribosomal subunit protein uL18 (122 aa).

It belongs to the universal ribosomal protein uL18 family. Part of the 50S ribosomal subunit; part of the 5S rRNA/L5/L18/L25 subcomplex. Contacts the 5S and 23S rRNAs.

In terms of biological role, this is one of the proteins that bind and probably mediate the attachment of the 5S RNA into the large ribosomal subunit, where it forms part of the central protuberance. The polypeptide is Large ribosomal subunit protein uL18 (Citrifermentans bemidjiense (strain ATCC BAA-1014 / DSM 16622 / JCM 12645 / Bem) (Geobacter bemidjiensis)).